The chain runs to 239 residues: Orotidine 5'-phosphate decarboxylase (239 aa).

Substrate-binding positions include Asp-15, Lys-36, 63 to 72, Thr-127, Arg-189, Gln-198, Gly-218, and Arg-219; that span reads DLKFHDIPNT. Lys-65 acts as the Proton donor in catalysis.

Belongs to the OMP decarboxylase family. Type 1 subfamily. As to quaternary structure, homodimer.

It catalyses the reaction orotidine 5'-phosphate + H(+) = UMP + CO2. It participates in pyrimidine metabolism; UMP biosynthesis via de novo pathway; UMP from orotate: step 2/2. Functionally, catalyzes the decarboxylation of orotidine 5'-monophosphate (OMP) to uridine 5'-monophosphate (UMP). In Prochlorococcus marinus (strain MIT 9515), this protein is Orotidine 5'-phosphate decarboxylase.